A 621-amino-acid chain; its full sequence is (-)-beta-phellandrene synthase 1, chloroplastic (621 aa).

Residues 1–49 constitute a chloroplast transit peptide; it reads MALALVSVAPLVSMRRSLFSSPYELKSIDKTIPNLVMCRKRMLGRPSIR. 3 residues coordinate Mg(2+): aspartate 372, aspartate 376, and aspartate 524. A DDXXD motif motif is present at residues 372–376; that stretch reads DDIYD.

Belongs to the terpene synthase family. Tpsd subfamily. Mg(2+) serves as cofactor. Mn(2+) is required as a cofactor.

Its subcellular location is the plastid. The protein resides in the chloroplast. It catalyses the reaction (2E)-geranyl diphosphate = (-)-beta-phellandrene + diphosphate. It participates in terpene metabolism; oleoresin biosynthesis. It functions in the pathway secondary metabolite biosynthesis; terpenoid biosynthesis. In terms of biological role, monoterpene synthase (TPS) involved in the biosynthesis of monoterpene natural products included in conifer oleoresin secretions and volatile emissions; these compounds contribute to biotic and abiotic stress defense against herbivores and pathogens. Catalyzes the conversion of (2E)-geranyl diphosphate (GPP) to (-)-beta-phellandrene. The sequence is that of (-)-beta-phellandrene synthase 1, chloroplastic from Pinus banksiana (Jack pine).